A 512-amino-acid polypeptide reads, in one-letter code: Serine--tRNA ligase, cytoplasmic (512 aa).

Met1 bears the N-acetylmethionine mark. The interval 9–61 is interaction with tRNA; the sequence is RVDKGGDPALIRETQEKRFKDPGLVDQLVKADSEWRRCRFRADNLNKLKNLCS. Ser241 is subject to Phosphoserine. The L-serine site is built by Thr271 and Arg302. Residues 302 to 304 and 318 to 321 contribute to the ATP site; these read RQE and VHQF. Lys323 carries the post-translational modification N6-acetyllysine. Position 325 (Glu325) interacts with L-serine. Residue 391–394 coordinates ATP; the sequence is ELVS. Asn427 and Thr429 together coordinate L-serine. A disordered region spans residues 472–512; it reads KPAPIDQEPSKKQKKQHEGSKKKAKEVTLESQLQNMEVTEA. Positions 479–499 are enriched in basic and acidic residues; the sequence is EPSKKQKKQHEGSKKKAKEVT. Positions 482 to 494 match the Nuclear localization signal motif; sequence KKQKKQHEGSKKK. The segment covering 500–512 has biased composition (polar residues); that stretch reads LESQLQNMEVTEA.

The protein belongs to the class-II aminoacyl-tRNA synthetase family. Type-1 seryl-tRNA synthetase subfamily. Homodimer. The tRNA molecule may bind across the dimer. Interacts with SIRT2. Interacts with METTL6; interaction is required for the tRNA N(3)-methylcytidine methyltransferase activity of METTL6.

It localises to the cytoplasm. It is found in the nucleus. It carries out the reaction tRNA(Ser) + L-serine + ATP = L-seryl-tRNA(Ser) + AMP + diphosphate + H(+). It catalyses the reaction tRNA(Sec) + L-serine + ATP = L-seryl-tRNA(Sec) + AMP + diphosphate + H(+). It participates in aminoacyl-tRNA biosynthesis; selenocysteinyl-tRNA(Sec) biosynthesis; L-seryl-tRNA(Sec) from L-serine and tRNA(Sec): step 1/1. Its function is as follows. Catalyzes the attachment of serine to tRNA(Ser) in a two-step reaction: serine is first activated by ATP to form Ser-AMP and then transferred to the acceptor end of tRNA(Ser). Is probably also able to aminoacylate tRNA(Sec) with serine, to form the misacylated tRNA L-seryl-tRNA(Sec), which will be further converted into selenocysteinyl-tRNA(Sec). In the nucleus, binds to the VEGFA core promoter and prevents MYC binding and transcriptional activation by MYC. Recruits SIRT2 to the VEGFA promoter, promoting deacetylation of histone H4 at 'Lys-16' (H4K16). Thereby, inhibits the production of VEGFA and sprouting angiogenesis mediated by VEGFA. The sequence is that of Serine--tRNA ligase, cytoplasmic (SARS1) from Cricetulus griseus (Chinese hamster).